Consider the following 185-residue polypeptide: ATP-dependent protease subunit HslV (185 aa).

The active site involves T12. 3 residues coordinate Na(+): S168, C171, and T174.

The protein belongs to the peptidase T1B family. HslV subfamily. A double ring-shaped homohexamer of HslV is capped on each side by a ring-shaped HslU homohexamer. The assembly of the HslU/HslV complex is dependent on binding of ATP.

It localises to the cytoplasm. It carries out the reaction ATP-dependent cleavage of peptide bonds with broad specificity.. Allosterically activated by HslU binding. In terms of biological role, protease subunit of a proteasome-like degradation complex believed to be a general protein degrading machinery. The chain is ATP-dependent protease subunit HslV from Jannaschia sp. (strain CCS1).